Consider the following 123-residue polypeptide: Small ribosomal subunit protein uS11 (123 aa).

Belongs to the universal ribosomal protein uS11 family. Part of the 30S ribosomal subunit. Interacts with proteins S7 and S18. Binds to IF-3.

Functionally, located on the platform of the 30S subunit, it bridges several disparate RNA helices of the 16S rRNA. Forms part of the Shine-Dalgarno cleft in the 70S ribosome. The protein is Small ribosomal subunit protein uS11 of Coxiella burnetii (strain RSA 331 / Henzerling II).